The following is a 218-amino-acid chain: Pyridoxine/pyridoxamine 5'-phosphate oxidase (218 aa).

Substrate-binding positions include 14–17 (RREY) and Lys-72. Residues 67 to 72 (RIVLLK), 82 to 83 (YT), Arg-88, Lys-89, and Gln-111 contribute to the FMN site. Substrate is bound by residues Tyr-129, Arg-133, and Ser-137. Residues 146–147 (QS) and Trp-191 contribute to the FMN site. 197 to 199 (RLH) contacts substrate. Arg-201 provides a ligand contact to FMN.

Belongs to the pyridoxamine 5'-phosphate oxidase family. As to quaternary structure, homodimer. The cofactor is FMN.

It catalyses the reaction pyridoxamine 5'-phosphate + O2 + H2O = pyridoxal 5'-phosphate + H2O2 + NH4(+). The catalysed reaction is pyridoxine 5'-phosphate + O2 = pyridoxal 5'-phosphate + H2O2. It participates in cofactor metabolism; pyridoxal 5'-phosphate salvage; pyridoxal 5'-phosphate from pyridoxamine 5'-phosphate: step 1/1. The protein operates within cofactor metabolism; pyridoxal 5'-phosphate salvage; pyridoxal 5'-phosphate from pyridoxine 5'-phosphate: step 1/1. Its function is as follows. Catalyzes the oxidation of either pyridoxine 5'-phosphate (PNP) or pyridoxamine 5'-phosphate (PMP) into pyridoxal 5'-phosphate (PLP). This chain is Pyridoxine/pyridoxamine 5'-phosphate oxidase, found in Escherichia coli (strain SMS-3-5 / SECEC).